Consider the following 184-residue polypeptide: Ribosome maturation factor RimM (184 aa).

Residues 93–165 enclose the PRC barrel domain; it reads DEGWYEHELV…YILITPPSGL (73 aa).

It belongs to the RimM family. In terms of assembly, binds ribosomal protein uS19.

It is found in the cytoplasm. An accessory protein needed during the final step in the assembly of 30S ribosomal subunit, possibly for assembly of the head region. Essential for efficient processing of 16S rRNA. May be needed both before and after RbfA during the maturation of 16S rRNA. It has affinity for free ribosomal 30S subunits but not for 70S ribosomes. The polypeptide is Ribosome maturation factor RimM (Paenarthrobacter aurescens (strain TC1)).